The chain runs to 312 residues: Taste receptor type 2 member 103 (312 aa).

At 1 to 16 (MVVTMRAALRLMLIST) the chain is on the extracellular side. Residues 17–37 (VSLELIIGILANVFIALVNII) traverse the membrane as a helical segment. The Cytoplasmic segment spans residues 38–65 (DWIKRGKISAVDKIYMGLAISRTAFVLS). The chain crosses the membrane as a helical span at residues 66 to 86 (VITGFLIAFLDPASLGIGIMI). Residues 87–92 (RLLTMS) lie on the Extracellular side of the membrane. A helical membrane pass occupies residues 93-113 (WTVTNHFSVWFATCLSIFYFL). Over 114–133 (KITNFSNTVFLALKWKVKKV) the chain is Cytoplasmic. The helical transmembrane segment at 134–154 (VSVTLVVSLIILFINVIVIHI) threads the bilayer. Residues 155–184 (YTDRFQVNMVQKCGANNTLRAYGLFLSIST) lie on the Extracellular side of the membrane. The N-linked (GlcNAc...) asparagine glycan is linked to asparagine 170. Residues 185–205 (VFTFIPFTASLTMFLLLIFSL) form a helical membrane-spanning segment. The Cytoplasmic portion of the chain corresponds to 206 to 229 (WRHLKTMHHNATGSRDVSTVAHIK). Residues 230–250 (GLQTVVAFLLLYTVFAMSLFS) form a helical membrane-spanning segment. Topologically, residues 251–264 (QSLSIDAQHTNLLS) are extracellular. Residues 265-285 (HFLRCIGVAFPSGHSCALILG) form a helical membrane-spanning segment. Residues 286–312 (NNKLRQASLSVIFWLRCKYKHTENQGP) are Cytoplasmic-facing.

It belongs to the G-protein coupled receptor T2R family.

The protein localises to the membrane. Functionally, gustducin-coupled receptor implicated in the perception of bitter compounds in the oral cavity and the gastrointestinal tract. Signals through PLCB2 and the calcium-regulated cation channel TRPM5. This Rattus norvegicus (Rat) protein is Taste receptor type 2 member 103.